Consider the following 573-residue polypeptide: Probable CoA ligase CCL13 (573 aa).

Residues 216 to 224, 352 to 357, D449, 461 to 464, and K556 contribute to the ATP site; these read TSGTTARPK, HIYGLT, and LKDR. An SBD1 region spans residues 284–352; sequence SPKAIFDNIH…MEEMGFQVNH (69 aa). The SBD2 stretch occupies residues 353-429; the sequence is IYGLTETHGP…FRGNTVMSGY (77 aa).

The protein belongs to the ATP-dependent AMP-binding enzyme family.

It localises to the cytoplasm. The protein resides in the cytosol. This chain is Probable CoA ligase CCL13, found in Humulus lupulus (European hop).